Here is a 632-residue protein sequence, read N- to C-terminus: 1,4-alpha-glucan branching enzyme GlgB (632 aa).

Residue aspartate 310 is the Nucleophile of the active site. Glutamate 363 serves as the catalytic Proton donor.

The protein belongs to the glycosyl hydrolase 13 family. GlgB subfamily. In terms of assembly, monomer.

The enzyme catalyses Transfers a segment of a (1-&gt;4)-alpha-D-glucan chain to a primary hydroxy group in a similar glucan chain.. It functions in the pathway glycan biosynthesis; glycogen biosynthesis. In terms of biological role, catalyzes the formation of the alpha-1,6-glucosidic linkages in glycogen by scission of a 1,4-alpha-linked oligosaccharide from growing alpha-1,4-glucan chains and the subsequent attachment of the oligosaccharide to the alpha-1,6 position. This Desulfitobacterium hafniense (strain Y51) protein is 1,4-alpha-glucan branching enzyme GlgB.